The sequence spans 437 residues: Aspartic proteinase CDR1 (437 aa).

An N-terminal signal peptide occupies residues 1–25 (MASLFSSVLLSLCLLSSLFLSNANA). The propeptide at 26 to 73 (KPKLGFTADLIHRDSPKSPFYNPMETSSQRLRNAIHRSVNRVFHFTEK) is activation peptide. Positions 90-430 (YLMNVSIGTP…DTVSKTVSFK (341 aa)) constitute a Peptidase A1 domain. N-linked (GlcNAc...) asparagine glycosylation occurs at asparagine 93. Residues aspartate 108 and aspartate 319 contribute to the active site.

Belongs to the peptidase A1 family.

The protein localises to the secreted. It localises to the extracellular space. Its subcellular location is the apoplast. In terms of biological role, involved in salicylic acid-dependent inducible resistance responses. May release an endogenous peptide elicitor required for the activation of inducible resistance mechanisms. Possesses protease activity in vitro. This chain is Aspartic proteinase CDR1 (CDR1), found in Arabidopsis thaliana (Mouse-ear cress).